The following is a 185-amino-acid chain: Large ribosomal subunit protein uL5 (185 aa).

This sequence belongs to the universal ribosomal protein uL5 family. Part of the 50S ribosomal subunit; part of the 5S rRNA/L5/L18/L25 subcomplex. Contacts the 5S rRNA and the P site tRNA. Forms a bridge to the 30S subunit in the 70S ribosome.

In terms of biological role, this is one of the proteins that bind and probably mediate the attachment of the 5S RNA into the large ribosomal subunit, where it forms part of the central protuberance. In the 70S ribosome it contacts protein S13 of the 30S subunit (bridge B1b), connecting the 2 subunits; this bridge is implicated in subunit movement. Contacts the P site tRNA; the 5S rRNA and some of its associated proteins might help stabilize positioning of ribosome-bound tRNAs. The chain is Large ribosomal subunit protein uL5 from Sinorhizobium medicae (strain WSM419) (Ensifer medicae).